The sequence spans 165 residues: NADPH-dependent 7-cyano-7-deazaguanine reductase (165 aa).

Cysteine 56 (thioimide intermediate) is an active-site residue. The active-site Proton donor is aspartate 63. Substrate contacts are provided by residues 78-80 (VES) and 97-98 (HE).

It belongs to the GTP cyclohydrolase I family. QueF type 1 subfamily.

It localises to the cytoplasm. It carries out the reaction 7-aminomethyl-7-carbaguanine + 2 NADP(+) = 7-cyano-7-deazaguanine + 2 NADPH + 3 H(+). It participates in tRNA modification; tRNA-queuosine biosynthesis. Its activity is regulated as follows. Is totally inhibited by 4-aminobenzylcyanide in vitro. In terms of biological role, catalyzes the NADPH-dependent reduction of 7-cyano-7-deazaguanine (preQ0) to 7-aminomethyl-7-deazaguanine (preQ1), a late step in the queuosine pathway. Is highly specific for its natural substrate preQ0, since it cannot use various aliphatic, aromatic and heterocyclic nitriles, although it can reduce the substrate analog 5-cyanopyrrolo[2,3-d]pyrimidin-4-one with lesser efficiency. In Geobacillus kaustophilus (strain HTA426), this protein is NADPH-dependent 7-cyano-7-deazaguanine reductase.